Consider the following 184-residue polypeptide: MNALQKFHHFFNCCIGAWHTERTYHYLDRGEVERSRTDFTIRTLTPELKEKVLADNNYPNHGVDGFLGFHLAFETVSEKGEEAGQELNMLFVPRREGPRGLEGDYLRDRAYEEDRPIVASFRFDPGSLQLVMTTTYTRVVAVDTITLLNPRLRLRQILTYQRPPHGQPLEELLLVGFGVEQKLT.

The protein belongs to the CpcS/CpeS biliprotein lyase family.

Its function is as follows. Covalently attaches a chromophore to Cys residue(s) of phycobiliproteins. The sequence is that of Chromophore lyase CpcS/CpeS 1 from Synechococcus sp. (strain JA-3-3Ab) (Cyanobacteria bacterium Yellowstone A-Prime).